Reading from the N-terminus, the 311-residue chain is Ribosomal RNA large subunit methyltransferase F (311 aa).

This sequence belongs to the methyltransferase superfamily. METTL16/RlmF family.

The protein localises to the cytoplasm. The catalysed reaction is adenosine(1618) in 23S rRNA + S-adenosyl-L-methionine = N(6)-methyladenosine(1618) in 23S rRNA + S-adenosyl-L-homocysteine + H(+). In terms of biological role, specifically methylates the adenine in position 1618 of 23S rRNA. The polypeptide is Ribosomal RNA large subunit methyltransferase F (Pectobacterium carotovorum subsp. carotovorum (strain PC1)).